Here is a 278-residue protein sequence, read N- to C-terminus: Neuronal membrane glycoprotein M6-a (278 aa).

M1 bears the N-acetylmethionine mark. Residues 1–22 lie on the Cytoplasmic side of the membrane; the sequence is MEENMEEGQTQKGCFECCIKCL. The chain crosses the membrane as a helical span at residues 23–43; the sequence is GGIPYASLIATILLYAGVALF. At 44–84 the chain is on the extracellular side; the sequence is CGCGHEALSGTVNILQTYFEMARTAGDTLDVFTMIDIFKYV. A helical membrane pass occupies residues 85 to 105; it reads IYGIAAAFFVYGILLMVEGFF. Topologically, residues 106 to 127 are cytoplasmic; it reads TTGAIKDLYGDFKITTCGRCVS. A helical membrane pass occupies residues 128–148; the sequence is AWFIMLTYLFMLAWLGVTAFT. Residues 149–213 are Extracellular-facing; it reads SLPVYMYFNL…STELNMTFHL (65 aa). N164 is a glycosylation site (N-linked (GlcNAc...) asparagine). An intrachain disulfide couples C174 to C192. N-linked (GlcNAc...) asparagine glycosylation is present at N208. Residues 214–234 traverse the membrane as a helical segment; the sequence is FIVALAGAGAAVIAMVHYLMV. At 235–278 the chain is on the cytoplasmic side; the sequence is LSANWAYVKDACRMQKYEDIKSKEEQELHDIHSTRSKERLNAYT. S256 bears the Phosphoserine mark. T278 bears the Phosphothreonine mark.

It belongs to the myelin proteolipid protein family. In terms of assembly, interacts with OPRM1. Interacts with palmitoyltransferase ZDHHC17/HIP14; the interaction leads to palmitoylation of GPM6A. N-glycosylated. Post-translationally, palmitoylated by ZDHHC17/HIP14.

It localises to the cell membrane. The protein resides in the cell projection. The protein localises to the axon. It is found in the growth cone. Its subcellular location is the dendritic spine. It localises to the filopodium. The protein resides in the neuron projection. Its function is as follows. Involved in neuronal differentiation, including differentiation and migration of neuronal stem cells. Plays a role in neuronal plasticity and is involved in neurite and filopodia outgrowth, filopodia motility and probably synapse formation. GPM6A-induced filopodia formation involves mitogen-activated protein kinase (MAPK) and Src signaling pathways. May be involved in neuronal NGF-dependent Ca(2+) influx. May be involved in regulation of endocytosis and intracellular trafficking of G-protein-coupled receptors (GPCRs); may enhance internalization and recycling of mu-type opioid receptor. This is Neuronal membrane glycoprotein M6-a (GPM6A) from Bos taurus (Bovine).